Here is a 165-residue protein sequence, read N- to C-terminus: Transcriptional repressor NrdR (165 aa).

The segment at 3–34 is a zinc-finger region; the sequence is CPFCRNPDSRVVDSRMADDGSAIRRRRQCPEC. One can recognise an ATP-cone domain in the interval 46–136; that stretch reads LTVIKRSGVG…VYQAFESLED (91 aa).

The protein belongs to the NrdR family. The cofactor is Zn(2+).

In terms of biological role, negatively regulates transcription of bacterial ribonucleotide reductase nrd genes and operons by binding to NrdR-boxes. This Arthrobacter sp. (strain FB24) protein is Transcriptional repressor NrdR.